The chain runs to 704 residues: MSMFNTISREFQYGNEQVVIETGRIARQANSVLVHMGGVSVLVAVVVKSDAKEGQNFFPLTVNYQEKMYAAGKIPGAYGKREGRPTEFETLTSRLIDRPIRPLFPEGYVNEIQITATVISSDKKHYADIAAMIGASAALSISDAPFNGPIGGARVGFINGEYVLNPSIEELKSSDLDLVVAGTKSAVLMVESEAAELSEDQMLGAVLYGHEQQQIVIDNIAELAKAVGTQKQDFVAPELNAELKEKVTTQFGEQVAEAYAISDKQARYEKLDEIKAAAIDALAGDPESEEFAEKEAQIKEIYNDLKYRTVRDAILSGKPRIDGRDLDTVRALDIQVGVLPYTHGSALFTRGETQALVTTTLGNSRDVNLIDSLAGTIQDHFMLHYNFPHYSVGETGREGVPKRREIGHGRLARRGVQAMLPDSDRFPYVIRVVSEITESNGSSSMASVCGASLALMDAGVPLKAPVAGIAMGLVKEGDRFAVLSDILGDEDHLGDMDFKVAGTKDGITALQMDIKIEGITSDIMEKALEQAHAGRIHILNAMNEVLPASRTEINAHAPNYAVIEINSDKIRDVIGKGGATIRQLTEDTGAVIDIDDNGTIRIFGENKAATKEAIRQIEAITAEVEVGKVYKGTVARVVDFGAFVTVLPGTDGLVHISQIADERVESVSDYLSEGQQINVLVQDVDNRGRIKLTMKGVEQEQTQA.

2 residues coordinate Mg(2+): Asp491 and Asp497. A KH domain is found at 558 to 617 (PNYAVIEINSDKIRDVIGKGGATIRQLTEDTGAVIDIDDNGTIRIFGENKAATKEAIRQI). Residues 627-695 (GKVYKGTVAR…NRGRIKLTMK (69 aa)) form the S1 motif domain.

It belongs to the polyribonucleotide nucleotidyltransferase family. In terms of assembly, component of the RNA degradosome, which is a multiprotein complex involved in RNA processing and mRNA degradation. Mg(2+) serves as cofactor.

The protein localises to the cytoplasm. It catalyses the reaction RNA(n+1) + phosphate = RNA(n) + a ribonucleoside 5'-diphosphate. Involved in mRNA degradation. Catalyzes the phosphorolysis of single-stranded polyribonucleotides processively in the 3'- to 5'-direction. The chain is Polyribonucleotide nucleotidyltransferase from Psychrobacter sp. (strain PRwf-1).